Reading from the N-terminus, the 289-residue chain is NFU1 iron-sulfur cluster scaffold homolog, mitochondrial (289 aa).

The N-terminal 56 residues, 1–56 (MAKLISYAKGGFLRNTRLTSRAVPQVYQHATSSRGFVHLTSSVAQSSAIHVSTPST), are a transit peptide targeting the mitochondrion. Residues 183–251 (IKELLDTRIR…IPEVESVEQV (69 aa)) form a nifU region. [4Fe-4S] cluster-binding residues include Cys220 and Cys223. A disordered region spans residues 267-289 (ERNLKQKDTSSTAPVGIGGGPAN).

This sequence belongs to the NifU family.

Its subcellular location is the mitochondrion. Functionally, molecular scaffold for [Fe-S] cluster assembly of mitochondrial iron-sulfur proteins. In Drosophila willistoni (Fruit fly), this protein is NFU1 iron-sulfur cluster scaffold homolog, mitochondrial.